Here is a 396-residue protein sequence, read N- to C-terminus: Elongation factor Tu 2 (396 aa).

The region spanning 10 to 206 is the tr-type G domain; that stretch reads KPHINVGTIG…VLDSYIPEPQ (197 aa). Residues 19 to 26 form a G1 region; sequence GHVDHGKT. 19 to 26 is a binding site for GTP; it reads GHVDHGKT. Threonine 26 contacts Mg(2+). Residues 60 to 64 are G2; the sequence is GITIN. Residues 81–84 are G3; that stretch reads DCPG. GTP contacts are provided by residues 81 to 85 and 136 to 139; these read DCPGH and NKAD. The tract at residues 136 to 139 is G4; that stretch reads NKAD. A G5 region spans residues 174 to 176; it reads SAL.

The protein belongs to the TRAFAC class translation factor GTPase superfamily. Classic translation factor GTPase family. EF-Tu/EF-1A subfamily. Monomer.

Its subcellular location is the cytoplasm. It carries out the reaction GTP + H2O = GDP + phosphate + H(+). Its function is as follows. GTP hydrolase that promotes the GTP-dependent binding of aminoacyl-tRNA to the A-site of ribosomes during protein biosynthesis. This Nitrosomonas eutropha (strain DSM 101675 / C91 / Nm57) protein is Elongation factor Tu 2.